Consider the following 194-residue polypeptide: tRNA(Phe) 7-((3-amino-3-carboxypropyl)-4-demethylwyosine(37)-N(4))-methyltransferase 1 (194 aa).

It belongs to the TYW3 family.

It catalyses the reaction 4-demethyl-7-[(3S)-3-amino-3-carboxypropyl]wyosine(37) in tRNA(Phe) + S-adenosyl-L-methionine = 7-[(3S)-3-amino-3-carboxypropyl]wyosine(37) in tRNA(Phe) + S-adenosyl-L-homocysteine + H(+). In terms of biological role, S-adenosyl-L-methionine-dependent methyltransferase that acts as a component of the wyosine derivatives biosynthesis pathway. Probably methylates N-4 position of wybutosine-86 to produce wybutosine-72. This Pyrococcus abyssi (strain GE5 / Orsay) protein is tRNA(Phe) 7-((3-amino-3-carboxypropyl)-4-demethylwyosine(37)-N(4))-methyltransferase 1.